The sequence spans 40 residues: Photosystem II reaction center protein J (40 aa).

The helical transmembrane segment at Ile-8–Phe-28 threads the bilayer.

The protein belongs to the PsbJ family. PSII is composed of 1 copy each of membrane proteins PsbA, PsbB, PsbC, PsbD, PsbE, PsbF, PsbH, PsbI, PsbJ, PsbK, PsbL, PsbM, PsbT, PsbX, PsbY, PsbZ, Psb30/Ycf12, at least 3 peripheral proteins of the oxygen-evolving complex and a large number of cofactors. It forms dimeric complexes.

It is found in the plastid. Its subcellular location is the chloroplast thylakoid membrane. Functionally, one of the components of the core complex of photosystem II (PSII). PSII is a light-driven water:plastoquinone oxidoreductase that uses light energy to abstract electrons from H(2)O, generating O(2) and a proton gradient subsequently used for ATP formation. It consists of a core antenna complex that captures photons, and an electron transfer chain that converts photonic excitation into a charge separation. The sequence is that of Photosystem II reaction center protein J from Illicium oligandrum (Star anise).